The sequence spans 1513 residues: DNA polymerase alpha catalytic subunit (1513 aa).

The interval Ser-235 to Asp-254 is disordered. Zn(2+) contacts are provided by Cys-1344, Cys-1347, Cys-1370, Cys-1373, Cys-1404, Cys-1409, Cys-1422, and Cys-1427. Residues Cys-1344–Cys-1373 form a CysA-type zinc finger. The CysB motif signature appears at Cys-1404–Cys-1427.

It belongs to the DNA polymerase type-B family.

Its subcellular location is the nucleus. It carries out the reaction DNA(n) + a 2'-deoxyribonucleoside 5'-triphosphate = DNA(n+1) + diphosphate. In terms of biological role, polymerase alpha in a complex with DNA primase is a replicative polymerase. The chain is DNA polymerase alpha catalytic subunit from Oxytricha trifallax (Sterkiella histriomuscorum).